The chain runs to 243 residues: tRNA (guanine-N(1)-)-methyltransferase (243 aa).

S-adenosyl-L-methionine contacts are provided by residues Gly108 and 127-132 (LGDFVL).

This sequence belongs to the RNA methyltransferase TrmD family. As to quaternary structure, homodimer.

The protein resides in the cytoplasm. The catalysed reaction is guanosine(37) in tRNA + S-adenosyl-L-methionine = N(1)-methylguanosine(37) in tRNA + S-adenosyl-L-homocysteine + H(+). Functionally, specifically methylates guanosine-37 in various tRNAs. The protein is tRNA (guanine-N(1)-)-methyltransferase of Streptococcus pyogenes serotype M5 (strain Manfredo).